Here is a 171-residue protein sequence, read N- to C-terminus: Dual specificity protein phosphatase OPG106 (171 aa).

Residues 23–171 enclose the Tyrosine-protein phosphatase domain; the sequence is SPTIMTRVTN…IIEKYVIDKN (149 aa). The Phosphocysteine intermediate role is filled by cysteine 110.

Belongs to the protein-tyrosine phosphatase family. Non-receptor class dual specificity subfamily. Homodimer.

It is found in the virion. It localises to the host cytoplasm. It catalyses the reaction O-phospho-L-tyrosyl-[protein] + H2O = L-tyrosyl-[protein] + phosphate. The enzyme catalyses O-phospho-L-seryl-[protein] + H2O = L-seryl-[protein] + phosphate. With respect to regulation, inhibited by NSC-62914, NSC-28086, NSC-105687, NSC-23173, 540211 and 217691 with IC50 values of 48, 51, 212, 342, 4 and 11 uM, respectively. Its function is as follows. Serine/tyrosine phosphatase which down-regulates cellular antiviral response by dephosphorylating activated host STAT1 and blocking interferon (IFN)-stimulated innate immune responses. Dephosphorylates the OPG144 protein. This Homo sapiens (Human) protein is Dual specificity protein phosphatase OPG106 (OPG106).